The following is a 91-amino-acid chain: Acylphosphatase (91 aa).

An Acylphosphatase-like domain is found at 3–89 (AKHLILSGRV…PAEPGFVKRA (87 aa)). Active-site residues include Arg-18 and Asn-36.

This sequence belongs to the acylphosphatase family.

It carries out the reaction an acyl phosphate + H2O = a carboxylate + phosphate + H(+). This Acidiphilium cryptum (strain JF-5) protein is Acylphosphatase (acyP).